The sequence spans 316 residues: Probable cell division protein WhiA (316 aa).

A DNA-binding region (H-T-H motif) is located at residues 275-309; that stretch reads TLKELGEMVSGGKISKSGINHRLRKIDEIAEKLRA.

This sequence belongs to the WhiA family.

Its function is as follows. Involved in cell division and chromosome segregation. The protein is Probable cell division protein WhiA of Bacillus mycoides (strain KBAB4) (Bacillus weihenstephanensis).